The primary structure comprises 142 residues: Alpha-lactalbumin (142 aa).

An N-terminal signal peptide occupies residues 1-19; that stretch reads MMSFVSLLLVGILFHATQA. One can recognise a C-type lysozyme domain in the interval 20–142; it reads EQLTKCEVFQ…KLDQWLCEKL (123 aa). 4 disulfide bridges follow: cysteine 25/cysteine 139, cysteine 47/cysteine 130, cysteine 80/cysteine 96, and cysteine 92/cysteine 110. Asparagine 64 and asparagine 93 each carry an N-linked (GlcNAc...) asparagine glycan. Positions 98, 101, 103, 106, and 107 each coordinate Ca(2+).

The protein belongs to the glycosyl hydrolase 22 family. As to quaternary structure, lactose synthase (LS) is a heterodimer of a catalytic component, beta1,4-galactosyltransferase (beta4Gal-T1) and a regulatory component, alpha-lactalbumin (LA). Mammary gland specific. Secreted in milk.

The protein resides in the secreted. In terms of biological role, regulatory subunit of lactose synthase, changes the substrate specificity of galactosyltransferase in the mammary gland making glucose a good acceptor substrate for this enzyme. This enables LS to synthesize lactose, the major carbohydrate component of milk. In other tissues, galactosyltransferase transfers galactose onto the N-acetylglucosamine of the oligosaccharide chains in glycoproteins. The chain is Alpha-lactalbumin (LALBA) from Ovis aries (Sheep).